Consider the following 307-residue polypeptide: Yop proteins translocation protein Q (307 aa).

Belongs to the FliN/MopA/SpaO family.

Functionally, component of the Yop secretion machinery. The polypeptide is Yop proteins translocation protein Q (yscQ) (Yersinia pestis).